The primary structure comprises 38 residues: MKRFLIGAGVAAVILSGWFIADHQTHSQEMKVAEKMIG.

Positions 1-33 (MKRFLIGAGVAAVILSGWFIADHQTHSQEMKVA) are excised as a propeptide.

The protein belongs to the Phr family. Post-translationally, contains a predicted signal peptide cleavage site in the N-terminal region, however the propeptide is probably subject to only one processing event, at the N-terminal end of the mature peptide.

Its subcellular location is the secreted. The protein localises to the cytoplasm. Functionally, signaling molecule involved in the regulation of expression of DegU-controlled genes. Secreted during production, but the mature peptide acts intracellularly, indicating that it needs to be imported into the cell to function. Stimulates the DegU-dependent expression of aprE, an extracellular alkaline protease. Acts by inhibiting RapG activity. At high concentrations, represses the DegS-dependent aprE expression. The polypeptide is RapG inhibitor (phrG) (Bacillus subtilis (strain 168)).